Reading from the N-terminus, the 321-residue chain is 37 kDa cell surface protein (321 aa).

Its subcellular location is the secreted. It is found in the cell wall. The sequence is that of 37 kDa cell surface protein (CSP37) from Candida albicans (Yeast).